We begin with the raw amino-acid sequence, 1730 residues long: MDGPGASAVVVRVGIPDLQQTKCLRLDPTAPVWAAKQRVLCALNHSLQDALNYGLFQPPSRGRAGKFLDEERLLQDYPPNLDTPLPYLEFRYKRRVYAQNLIDDKQFAKLHTKANLKKFMDYVQLHSTDKVARLLDKGLDPNFHDPDSGECPLSLAAQLDNATDLLKVLRNGGAHLDFRTRDGLTAVHCATRQRNAGALTTLLDLGASPDYKDSRGLTPLYHSALGGGDALCCELLLHDHAQLGTTDENGWQEIHQACRFGHVQHLEHLLFYGANMGAQNASGNTALHICALYNQESCARVLLFRGANKDVRNYNSQTAFQVAIIAGNFELAEVIKTHKDSDVVPFRETPSYAKRRRLAGPSGLASPRPLQRSASDINLKGDQPAASPGPTLRSLPHQLLLQRLQEEKDRDRDGELENDISGPSAGRGGHNKISPSGPGGSGPAPGPGPASPAPPAPPPRGPKRKLYSAVPGRKFIAVKAHSPQGEGEIPLHRGEAVKVLSIGEGGFWEGTVKGRTGWFPADCVEEVQMRQYDTRHETREDRTKRLFRHYTVGSYDSLTSHSDYVIDDKVAILQKRDHEGFGFVLRGAKAETPIEEFTPTPAFPALQYLESVDVEGVAWRAGLRTGDFLIEVNGVNVVKVGHKQVVGLIRQGGNRLVMKVVSVTRKPEEDGARRRAPPPPKRAPSTTLTLRSKSMTAELEELASIRRRKGEKLDEILAVAAEPTLRPDIADADSRAATVKQRPTSRRITPAEISSLFERQGLPGPEKLPGSLRKGIPRTKSVGEDEKLASLLEGRFPRSTSMQDTVREGRGIPPPPQTAPPPPPAPYYFDSGPPPTFSPPPPPGRAYDTVRSSFKPGLEARLGAGAAGLYDPSTPLGPLPYPERQKRARSMIILQDSAPEVGDVPRPAPAATPPERPKRRPRPSGPDSPYANLGAFSASLFAPSKPQRRKSPLVKQLQVEDAQERAALAVGSPGPVGGSFAREPSPTHRGPRPGSLDYSSGEGLGLTFGGPSPGPVKERRLEERRRSTVFLSVGAIEGSPPSADLPSLQPSRSIDERLLGTGATTGRDLLLPSPVSALKPLVGGPSLGPSGSTFIHPLTGKPLDPSSPLALALAARERALASQTPSRSPTPVHSPDADRPGPLFVDVQTRDSERGPLASPAFSPRSPAWIPVPARREAEKPPREERKSPEDKKSMILSVLDTSLQRPAGLIVVHATSNGQEPSRLGAEEERPGTPELAPAPMQAAAVAEPMPSPRAQPPGSIPADPGPGQGSSEEEPELVFAVNLPPAQLSSSDEETREELARIGLVPPPEEFANGILLTTPPPGPGPLPTTVPSPASGKPSSELPPAPESAADSGVEEADTRSSSDPHLETTSTISTVSSMSTLSSESGELTDTHTSFADGHTFLLEKPPVPPKPKLKSPLGKGPVTFRDPLLKQSSDSELMAQQHHAASTGLASAAGPARPRYLFQRRSKLWGDPVESRGLPGPEDDKPTVISELSSRLQQLNKDTRSLGEEPVGGLGSLLDPAKKSPIAAARLFSSLGELSTISAQRSPGGPGGGASYSVRPSGRYPVARRAPSPVKPASLERVEGLGAGVGGAGRPFGLTPPTILKSSSLSIPHEPKEVRFVVRSVSARSRSPSPSPLPSPSPGSGPSAGPRRPFQQKPLQLWSKFDVGDWLESIHLGEHRDRFEDHEIEGAHLPALTKEDFVELGVTRVGHRMNIERALRQLDGS.

An intramolecular interaction with the ANK repeats region spans residues 1–75; that stretch reads MDGPGASAVV…KFLDEERLLQ (75 aa). At Tyr-122 the chain carries Phosphotyrosine. ANK repeat units lie at residues 148-178, 182-211, 215-245, 249-278, 282-311, and 315-345; these read SGEC…HLDF, DGLT…SPDY, RGLT…QLGT, NGWQ…NMGA, SGNT…NKDV, and NSQT…DVVP. Residues 354–466 form a disordered region; sequence KRRRLAGPSG…PPPRGPKRKL (113 aa). Ser-373, Ser-375, Ser-387, and Ser-394 each carry phosphoserine. Residues 404–415 are compositionally biased toward basic and acidic residues; it reads LQEEKDRDRDGE. Residues 444-460 are compositionally biased toward pro residues; that stretch reads APGPGPASPAPPAPPPR. Positions 470-529 constitute an SH3 domain; that stretch reads VPGRKFIAVKAHSPQGEGEIPLHRGEAVKVLSIGEGGFWEGTVKGRTGWFPADCVEEVQM. Ser-482 is modified (phosphoserine). Tyr-555 carries the phosphotyrosine modification. Residues 570 to 664 enclose the PDZ domain; sequence VAILQKRDHE…RLVMKVVSVT (95 aa). The interval 664 to 688 is disordered; the sequence is TRKPEEDGARRRAPPPPKRAPSTTL. Residues 677–684 form a required for interaction with ABI1 region; that stretch reads PPPPKRAP. Phosphoserine occurs at positions 694, 781, 790, and 801. 2 disordered regions span residues 760–1460 and 1475–1524; these read QGLP…AAGP and GDPV…SLLD. Pro residues predominate over residues 812–844; the sequence is IPPPPQTAPPPPPAPYYFDSGPPPTFSPPPPPG. Residues 857 to 869 show a composition bias toward low complexity; it reads GLEARLGAGAAGL. Residues Ser-890 and Ser-897 each carry the phosphoserine modification. Thr-912 is subject to Phosphothreonine. Tyr-930 carries the phosphotyrosine modification. Position 965 is an asymmetric dimethylarginine (Arg-965). Ser-995 bears the Phosphoserine mark. Over residues 1016–1026 the composition is skewed to basic and acidic residues; that stretch reads VKERRLEERRR. The span at 1078–1092 shows a compositional bias: low complexity; it reads LKPLVGGPSLGPSGS. A compositionally biased stretch (polar residues) spans 1122-1131; sequence SQTPSRSPTP. The residue at position 1130 (Thr-1130) is a Phosphothreonine. 4 positions are modified to phosphoserine: Ser-1134, Ser-1159, Ser-1163, and Ser-1166. Over residues 1174 to 1194 the composition is skewed to basic and acidic residues; sequence ARREAEKPPREERKSPEDKKS. Position 1234 is a phosphothreonine (Thr-1234). A compositionally biased stretch (low complexity) spans 1235–1250; it reads PELAPAPMQAAAVAEP. Pro residues-rich tracts occupy residues 1251 to 1261 and 1321 to 1333; these read MPSPRAQPPGS and TPPP…PTTV. Ser-1253 is subject to Phosphoserine. Over residues 1360–1370 the composition is skewed to basic and acidic residues; sequence ADTRSSSDPHL. A compositionally biased stretch (low complexity) spans 1371 to 1392; the sequence is ETTSTISTVSSMSTLSSESGEL. The SH3-binding signature appears at 1410–1416; that stretch reads PPVPPKP. Ser-1420 is modified (phosphoserine). Residues 1494–1514 adopt a coiled-coil conformation; that stretch reads ISELSSRLQQLNKDTRSLGEE. The span at 1495-1505 shows a compositional bias: polar residues; that stretch reads SELSSRLQQLN. Residues Ser-1510, Ser-1521, Ser-1529, and Ser-1539 each carry the phosphoserine modification. 2 disordered regions span residues 1546-1584 and 1627-1663; these read ISAQ…PASL and VRSV…QQKP. Low complexity predominate over residues 1627–1637; the sequence is VRSVSARSRSP. Phosphoserine is present on residues Ser-1634, Ser-1636, and Ser-1638. Positions 1638–1648 are enriched in pro residues; it reads SPSPLPSPSPG. Positions 1649–1658 are enriched in low complexity; sequence SGPSAGPRRP. Residues 1667–1730 enclose the SAM domain; sequence WSKFDVGDWL…ERALRQLDGS (64 aa).

Belongs to the SHANK family. As to quaternary structure, may homomultimerize via its SAM domain. Interacts with BAIAP2, DBNL and SLC17A7/VGLUT1. Interacts with DLGAP1/GKAP, GRM1/MGLUR1, GRM5/MGLUR5 and LZTS3 C-termini via its PDZ domain. Interacts with ABI1, HOMER1, HOMER2, HOMER3 and CTTN/cortactin SH3 domain. Is part of a complex with DLG4/PSD-95 and DLGAP1/GKAP. Interacts (via PDZ domain) with the GRIA1 subunit of the AMPA receptor (via PDZ-binding motif). Interacts with WASF1 and CYFIP2; the interactions mediate the association of SHANK3 with the WAVE1 complex. Interacts with ARPC2; the interaction probably mediates the association of SHANK3 with the Arp2/3 complex. Interacts (via ANK repeats) with SHARPIN and SPTAN1. Interacts (via PDZ domain) with ARHGAP44 (probably via PDZ-binding motif); the interaction takes place in dendritic spines and promotes GRIA1 exocytosis. Interacts with CAMK2A. Interacts with DIP2A. Interacts with ADGRL3. In terms of tissue distribution, in brain, highly expressed in striatum, thalamus, hippocampus and granule cells of the cerebellum.

It is found in the cytoplasm. Its subcellular location is the synapse. It localises to the postsynaptic density. The protein localises to the cell projection. The protein resides in the dendritic spine. Functionally, major scaffold postsynaptic density protein which interacts with multiple proteins and complexes to orchestrate the dendritic spine and synapse formation, maturation and maintenance. Interconnects receptors of the postsynaptic membrane including NMDA-type and metabotropic glutamate receptors via complexes with GKAP/PSD-95 and HOMER, respectively, and the actin-based cytoskeleton. Plays a role in the structural and functional organization of the dendritic spine and synaptic junction through the interaction with Arp2/3 and WAVE1 complex as well as the promotion of the F-actin clusters. By way of this control of actin dynamics, participates in the regulation of developing neurons growth cone motility and the NMDA receptor-signaling. Also modulates GRIA1 exocytosis and GRM5/MGLUR5 expression and signaling to control the AMPA and metabotropic glutamate receptor-mediated synaptic transmission and plasticity. May be required at an early stage of synapse formation and be inhibited by IGF1 to promote synapse maturation. The protein is SH3 and multiple ankyrin repeat domains protein 3 (Shank3) of Mus musculus (Mouse).